The sequence spans 224 residues: Aminopyrimidine aminohydrolase (224 aa).

Residue Asp44 coordinates substrate. The active-site Nucleophile is Cys135. Residues Tyr139 and Tyr165 each contribute to the substrate site. The active-site Proton donor is the Glu207.

This sequence belongs to the TenA family. As to quaternary structure, homotetramer.

The enzyme catalyses 4-amino-5-aminomethyl-2-methylpyrimidine + H2O = 4-amino-5-hydroxymethyl-2-methylpyrimidine + NH4(+). It carries out the reaction thiamine + H2O = 5-(2-hydroxyethyl)-4-methylthiazole + 4-amino-5-hydroxymethyl-2-methylpyrimidine + H(+). The protein operates within cofactor biosynthesis; thiamine diphosphate biosynthesis. In terms of biological role, catalyzes an amino-pyrimidine hydrolysis reaction at the C5' of the pyrimidine moiety of thiamine compounds, a reaction that is part of a thiamine salvage pathway. Thus, catalyzes the conversion of 4-amino-5-aminomethyl-2-methylpyrimidine to 4-amino-5-hydroxymethyl-2-methylpyrimidine (HMP). To a lesser extent, is also able to catalyze the hydrolytic cleavage of thiamine; however, this thiaminase activity is unlikely to be physiologically relevant. Therefore, is involved in the regeneration of the thiamine pyrimidine from thiamine degraded products present in the environment, rather than in thiamine degradation. This is Aminopyrimidine aminohydrolase from Halalkalibacterium halodurans (strain ATCC BAA-125 / DSM 18197 / FERM 7344 / JCM 9153 / C-125) (Bacillus halodurans).